The sequence spans 284 residues: MRLIIVSGRSGSGKSTALDVLEDSGFYCIDNLPAGLLPQLAENALINTELLQPKVAVSIDARNLPSHLMRFPELLEEARARHIQCDVLYLDADEEVLLKRFSETRRRHPLTNANRSLAEAIRVESDLLGPIADLADLKIDTTNLNLYQLRDSIKLRLLNQPEPGTAFLVESFGFKRGMPVDADLVFDVRCLPNPYWKPELREHSGLDQPVIDYLAAQPDVEDMYNDISSYLLKWLPRFAASNRAYVTIAIGCTGGHHRSVYITERLGQQLQQTLKNVQVRHRDL.

8–15 (GRSGSGKS) contributes to the ATP binding site. 60–63 (DARN) contributes to the GTP binding site.

The protein belongs to the RapZ-like family.

In terms of biological role, displays ATPase and GTPase activities. The polypeptide is Nucleotide-binding protein Pput_0988 (Pseudomonas putida (strain ATCC 700007 / DSM 6899 / JCM 31910 / BCRC 17059 / LMG 24140 / F1)).